We begin with the raw amino-acid sequence, 640 residues long: Endoglucanase 2 (640 aa).

The N-terminal stretch at 1–34 (MARGGGAAGVSMAHHLGIALVVLVFAAMAQVARG) is a signal peptide. Asp93 (nucleophile) is an active-site residue. Residues His428, Asp480, and Glu489 contribute to the active site. Residues 512-640 (RARGRLGQSL…DVWVTGYKLV (129 aa)) constitute a propeptide, removed in mature form. Asn528 carries N-linked (GlcNAc...) asparagine glycosylation.

This sequence belongs to the glycosyl hydrolase 9 (cellulase E) family. As to expression, expressed in roots and flowers.

It is found in the secreted. It catalyses the reaction Endohydrolysis of (1-&gt;4)-beta-D-glucosidic linkages in cellulose, lichenin and cereal beta-D-glucans.. Its function is as follows. Hydrolyzes 1,4-beta-glycosyl linkages of 1,4-beta-glucans and 1,3-1,4-beta-glucans. Possesses broad substrate specificity for hemicelluloses of type II cell walls. Substrate preference is carboxymethyl-cellulose &gt; 1,3-1,4-beta-glucan &gt; lichenan &gt; arabinoxylan &gt; phospho-swollen cellulose &gt; xylan &gt; glucomannan. May participate in lateral root development. This is Endoglucanase 2 (GLU5) from Oryza sativa subsp. japonica (Rice).